The chain runs to 92 residues: Small ribosomal subunit protein uS19 (92 aa).

It belongs to the universal ribosomal protein uS19 family.

Its function is as follows. Protein S19 forms a complex with S13 that binds strongly to the 16S ribosomal RNA. This is Small ribosomal subunit protein uS19 from Methylorubrum extorquens (strain CM4 / NCIMB 13688) (Methylobacterium extorquens).